A 380-amino-acid chain; its full sequence is Shaggy-related protein kinase eta (380 aa).

One can recognise a Protein kinase domain in the interval 40–324 (YMAERVVGTG…ALEACAHPFF (285 aa)). Residues 46–54 (VGTGSFGIV) and Lys-69 each bind ATP. Position 104 is a phosphothreonine (Thr-104). Ser-105 carries the post-translational modification Phosphoserine. Residue Asp-165 is the Proton acceptor of the active site. A Phosphoserine modification is found at Ser-187. Tyr-200 bears the Phosphotyrosine mark. Phosphothreonine occurs at positions 220 and 261. Ser-310 is modified (phosphoserine). Thr-314 carries the phosphothreonine modification. Position 353 is a phosphoserine (Ser-353).

It belongs to the protein kinase superfamily. CMGC Ser/Thr protein kinase family. GSK-3 subfamily. In terms of assembly, interacts in vitro with the C-terminal fragment of BZR1 and with BES1/BZR2, but not through the kinase domain. Interacts with BHLH150, beet curly top virus AL4/C4 and tomato golden mosaic virus AL4/AC4. Interacts with YDA. Interacts with MKK4. Interacts with KIB1 and KIB2 in a brassinosteroid (BR)-dependent manner. Interacts with BSK1, BSK6, BSK8 and BSK11. Binds to WRKY46, WRKY54 and WRKY70. Component of a complex made of POLAR, BASL, ASK7/BIN2 and ASK3/SK12. Binds to POLAR and BASL. Autophosphorylated mainly on threonine and serine residues. In terms of processing, ubiquitination and subsequent proteasomal degradation mediated by KIB1. In the two outer cell layers of the developing seed coat and restricted to the suspensor cells in developing embryos. Mostly expressed in stomatal lineage cells with asymmetric cell division (ACD) potential. Observed in small cells of non-protruding hypocotyl cell files and of developing cotyledon epidermis.

It localises to the cytoplasm. The protein resides in the cell cortex. Its subcellular location is the nucleus. The protein localises to the cell membrane. The enzyme catalyses L-seryl-[protein] + ATP = O-phospho-L-seryl-[protein] + ADP + H(+). The catalysed reaction is L-threonyl-[protein] + ATP = O-phospho-L-threonyl-[protein] + ADP + H(+). With respect to regulation, inactivated by an unknown mechanism after binding of brassinosteroids to the brassinosteroid receptor complex. Inhibited by lithium. Inhibited by dephosphorylation at Tyr-200 by BSU1. Competitive inhibition by KIB1 that reduces substrate (e.g. BZR1) access. Repressed by bikinin. Negative regulator in brassinosteroid signal transduction pathway important for plant growth. May be also involved in auxin signaling pathway. Phosphorylates and increases the degradation of BZR1 and BZR2/BES1 by the proteasome. Phosphorylates BHLH150, beet curly top virus C4 and tomato golden mosaic virus AC4 on threonine and serine residues. Upon brassinosteroid signaling, inhibits stomatal development by phosphorylating and inhibiting the MAPKK kinase YDA and the MAPK kinases MKK4 and MKK5. Phosphorylates BSK1, BSK3, BSK5, BSK6, BSK8 and BSK11 in vitro. Phoyphorylates and destabilizes WRKY46, WRKY54 and WRKY70. Mediates BASL nuclear exclusion; kinase activity is required for this function. Required first at the cortical polarity site, to restrict MAPK signaling and promote asymmetric cell division (ACD), and second in the nucleus of stomatal lineage ground cells (SLGCs) or meristemoids, to limit cell division and to promote differentiation into pavement or stomatal guard cells, respectively, likely by initiating BASL polarization. Phosphorylates BASL, YDA and SPCH in vitro and POLAR in vivo. Phosphorylates and inhibits SPCH in the nucleus of SLGC undergoing ACD, thus negatively regulating stomatal development. This Arabidopsis thaliana (Mouse-ear cress) protein is Shaggy-related protein kinase eta.